The chain runs to 586 residues: Proton channel OTOP1 (586 aa).

At 1-52 (MVEHGGTDSMWLNKYNPAAASSASSSSSSDAENKLFSRLKVSLTKKYPQKNA) the chain is on the cytoplasmic side. A helical transmembrane segment spans residues 53–74 (ELLSAQYGTNLLLLGVSVMLAL). Residues 75 to 82 (AAQSGPVK) lie on the Extracellular side of the membrane. The chain crosses the membrane as a helical span at residues 83 to 106 (EEHLLSFITVLMLVQLVWMLCYMI). Residues 107–124 (RRERERSPVPERDAHAGA) lie on the Cytoplasmic side of the membrane. A helical membrane pass occupies residues 125–147 (SWIRGGLTMLALLSLIMDAFRIG). Topologically, residues 148–157 (YFVGYHSCIS) are extracellular. Residues 158–182 (AALGVYPIVHALHTISQVHFLWFHI) form a helical membrane-spanning segment. Residues 183 to 190 (KDVIKKYE) are Cytoplasmic-facing. The chain crosses the membrane as a helical span at residues 191–217 (TFERFGVIHAVFTNLLLWCNGVMSETE). Residues 218 to 255 (HFMHNHRRRLIEMGYANLSTVDVQPHCNCTTSVCSMFS) are Extracellular-facing. The chain crosses the membrane as a helical span at residues 256-281 (TSLYYLYPFNIEYHIFVSAMLFVMWK). Topologically, residues 282 to 303 (NIGRTLDRHSNRKRRSTGSTGL) are cytoplasmic. A helical membrane pass occupies residues 304-326 (LLGPLGGLVALASSVSVLVVYLI). Residues 327–336 (HLEKTEEMHE) lie on the Extracellular side of the membrane. The chain crosses the membrane as a helical span at residues 337–362 (AAVSMFYYYGVAMMACMCVGSGTGLL). The Cytoplasmic segment spans residues 363–380 (VYRMENRPMDTGSNPART). A helical membrane pass occupies residues 381-405 (LDTELLLASSLGSWLMSWCSVVASV). The Extracellular segment spans residues 406-417 (AEAGQKSPSFSW). A helical membrane pass occupies residues 418-438 (TSLTYSLLLVLEKCIQNLFIV). The Cytoplasmic segment spans residues 439–518 (ESLYRRHSEE…TPGRKRQILK (80 aa)). The disordered stretch occupies residues 484-505 (PAAGSHALSRKQPDAPLPAGQR). Residues 519–537 (NICMFLFMCNISLWILPAF) form a helical membrane-spanning segment. The Extracellular portion of the chain corresponds to 538-555 (GCRPQYDNPLENETFGTS). Residues 556–579 (VWTTVLNVAIPLNLFYRMHSVASL) form a helical membrane-spanning segment. At 580–586 (FEVFRKV) the chain is on the cytoplasmic side.

This sequence belongs to the otopetrin family. As to quaternary structure, homodimer.

The protein localises to the cell membrane. The protein resides in the cell projection. Its subcellular location is the microvillus. The catalysed reaction is H(+)(in) = H(+)(out). With respect to regulation, activated by both acid and alkali, with proton influx in response to extracellular acid and proton efflux during alkali stimulation. Inhibited by Zn(2+); this inhibition is thought to be pH-sensitive. Currents evoked in response to mild acid (pH 6.0) stimulus may also be mildly potentiated by exposure to Zn(2+). Activated by NH(4)Cl. Proton-selective ion channel. Biphasically modulated by acid and alkali, mediating proton influx and efflux in response to extracellular acid and base stimulation, respectively. May be involved in acid and base perception. Sensor for ammonium chloride (NH(4)Cl) in taste receptor cells. NH(4)Cl acts by increasing the intracellular pH, thereby generating a driving force for proton entry through OTOP1 channel. Plays a role in the regulation of Ca(2+) flux in response to purigenic (ATP, ADP and UDP) stimuli, leading to increase in cytosolic Ca(2+) due to influx of extracellular calcium. May play this role by inhibiting P2Y purinoceptor-mediated Ca(2+) release in a Ca(2+)-dependent manner and promote an influx of Ca(2+) in response to ATP. Through this mechanism and possibly others, plays a role in the formation and function of calcium carbonate-based structures in the vestibular system of the inner ear, called otoconia, that sense gravity and linear acceleration. In Danio rerio (Zebrafish), this protein is Proton channel OTOP1.